Reading from the N-terminus, the 150-residue chain is uncharacterized protein (150 aa).

To A.tumefaciens conjugal transfer protein TraB.

This is an uncharacterized protein from Agrobacterium tumefaciens (strain 15955).